A 322-amino-acid chain; its full sequence is Acetyl-coenzyme A carboxylase carboxyl transferase subunit alpha (322 aa).

Positions 39–293 (RLQKKSQALT…RRALTDTLAE (255 aa)) constitute a CoA carboxyltransferase C-terminal domain.

The protein belongs to the AccA family. In terms of assembly, acetyl-CoA carboxylase is a heterohexamer composed of biotin carboxyl carrier protein (AccB), biotin carboxylase (AccC) and two subunits each of ACCase subunit alpha (AccA) and ACCase subunit beta (AccD).

Its subcellular location is the cytoplasm. The enzyme catalyses N(6)-carboxybiotinyl-L-lysyl-[protein] + acetyl-CoA = N(6)-biotinyl-L-lysyl-[protein] + malonyl-CoA. It functions in the pathway lipid metabolism; malonyl-CoA biosynthesis; malonyl-CoA from acetyl-CoA: step 1/1. In terms of biological role, component of the acetyl coenzyme A carboxylase (ACC) complex. First, biotin carboxylase catalyzes the carboxylation of biotin on its carrier protein (BCCP) and then the CO(2) group is transferred by the carboxyltransferase to acetyl-CoA to form malonyl-CoA. The sequence is that of Acetyl-coenzyme A carboxylase carboxyl transferase subunit alpha from Thiobacillus denitrificans (strain ATCC 25259 / T1).